We begin with the raw amino-acid sequence, 1137 residues long: Receptor-type guanylate cyclase gcy-1 (1137 aa).

Residues 1–18 (MQIFTILLLFNIFPSIFV) form the signal peptide. The Extracellular portion of the chain corresponds to 19–494 (QNLPDTTVAP…CPVSFWEQYK (476 aa)). N-linked (GlcNAc...) asparagine glycosylation is found at Asn-219, Asn-348, Asn-358, Asn-384, Asn-417, and Asn-451. Residues 495 to 515 (ILIFVAIAVIVLMVLIMIIGC) form a helical membrane-spanning segment. The Cytoplasmic portion of the chain corresponds to 516–1137 (LCVISGKRAE…FKMDTLKVAN (622 aa)). The region spanning 557–826 (LQSAPSISTG…ENICSQMKGL (270 aa)) is the Protein kinase domain. Positions 840–871 (NMLEEYTSTLEEEIEERTKELTLEKKKADILL) form a coiled coil. Residues 898–1028 (TVFFSDVVKF…DTVNTASRME (131 aa)) enclose the Guanylate cyclase domain. The segment at 1086–1122 (ELRSISNRSTPPVTNDRWIPNPSSSHGSRPSSVYDPL) is disordered. Polar residues predominate over residues 1088-1098 (RSISNRSTPPV). Residues 1105–1117 (PNPSSSHGSRPSS) show a composition bias toward low complexity.

Belongs to the adenylyl cyclase class-4/guanylyl cyclase family. In terms of tissue distribution, expressed predominantly in sensory neurons. Expressed asymmetrically in the right ASE (ASER) neuron and bilaterally in ASI and URX neurons. Expressed in PVT and bilaterally in AIY non-sensory neurons. Expressed in intestine.

It localises to the membrane. It catalyses the reaction GTP = 3',5'-cyclic GMP + diphosphate. Its function is as follows. Guanylate cyclase involved in the production of the second messenger cGMP. Involved in the sensing of K+ gradient by the ASE right (ASER) sensory neuron. This chain is Receptor-type guanylate cyclase gcy-1 (gcy-1), found in Caenorhabditis elegans.